The chain runs to 788 residues: Pre-rRNA-processing protein TSR1 homolog (788 aa).

The segment at 1-40 is disordered; that stretch reads MSTTGHRAGVFKKPAKPHKSWKGKRTKGEITTENRGREGV. Positions 9–25 are enriched in basic residues; that stretch reads GVFKKPAKPHKSWKGKR. The span at 26–40 shows a compositional bias: basic and acidic residues; it reads TKGEITTENRGREGV. The 161-residue stretch at 83-243 folds into the Bms1-type G domain; sequence APCLVTILSL…LRTLNETKKK (161 aa). Positions 354–433 are disordered; it reads LEEADKEMRR…ASEMMFHDEI (80 aa). A compositionally biased stretch (acidic residues) spans 378–412; that stretch reads DDSEDDEDEEDEDEDMDDEEEDKDLEEDDEEEDTP.

Belongs to the TRAFAC class translation factor GTPase superfamily. Bms1-like GTPase family. TSR1 subfamily.

It localises to the nucleus. It is found in the nucleolus. Required during maturation of the 40S ribosomal subunit in the nucleolus. This chain is Pre-rRNA-processing protein TSR1 homolog, found in Caenorhabditis briggsae.